Reading from the N-terminus, the 260-residue chain is Opacity protein opA58 (260 aa).

An N-terminal signal peptide occupies residues 1–23; the sequence is MNPAPKKPSLLFSSLLFSSAAQA.

Belongs to the opacity porin family.

The protein localises to the cell outer membrane. Its function is as follows. Implicated in a number of adherence functions. OPA proteins are implicated in pathogenesis and are subject to phase variation. This Neisseria gonorrhoeae protein is Opacity protein opA58 (opaJ).